The primary structure comprises 399 residues: MKKEDLMRSGFATRAIHGGAIENAFGCLATPIYQTSTFVFDTAEQGGRRFAGEEDGYIYTRLGNPNCTQVEEKLAMLEGGEAAASASSGIGAISSAIWVCVKAGDHIVAGKTLYGCTFAFLTHGLSRYGVEVTLVDTRHPEEVEAAIRPNTKLVYLETPANPNMYLTDIKAVCDIAHKHEGVRVMVDNTYCTPYICRPLELGADIVVHSATKYLNGHGDVIAGFVVGKEDYIKEVKLVGVKDLTGANMSPFDAYLISRGMKTLQIRMEQHCRNAQTVAEFLEKHPAVEAVYFPGLPSFPQYELAKKQMALPGAMIAFEVKGGCEAGKKLMNNLHLCSLAVSLGDTETLIQHPASMTHSPYTPEERAASDISEGLVRLSVGLENVEDIIADLKHGLDSLI.

Residues 59-61 (YTR) and 89-90 (GI) each bind pyridoxal 5'-phosphate. Tyr-114 serves as a coordination point for substrate. Position 209 to 211 (209 to 211 (SAT)) interacts with pyridoxal 5'-phosphate. Lys-212 carries the post-translational modification N6-(pyridoxal phosphate)lysine. Residue Arg-376 coordinates substrate.

The protein belongs to the trans-sulfuration enzymes family. L-methionine gamma-lyase subfamily. In terms of assembly, homotetramer; dimer of active dimers. Pyridoxal 5'-phosphate serves as cofactor.

It carries out the reaction L-methionine + H2O = methanethiol + 2-oxobutanoate + NH4(+). It catalyses the reaction L-homocysteine + H2O = 2-oxobutanoate + hydrogen sulfide + NH4(+) + H(+). Catalyzes the alpha,gamma-elimination of L-methionine to produce methanethiol, 2-oxobutanoate and ammonia; methanethiol (methyl mercaptan) is considered to be one of the main causes of the oral malodor in periodontal disease and may also play a role in the pathogenicity of P.gingivalis in that disease. Is also able to catalyze the alpha,gamma-elimination of L-homocysteine. The sequence is that of L-methionine gamma-lyase from Porphyromonas gingivalis (strain ATCC BAA-308 / W83).